Reading from the N-terminus, the 455-residue chain is Chromosomal replication initiator protein DnaA (455 aa).

The tract at residues methionine 1–methionine 75 is domain I, interacts with DnaA modulators. The tract at residues methionine 75–threonine 106 is domain II. Residues serine 107–alanine 321 form a domain III, AAA+ region region. Residues glycine 151, glycine 153, lysine 154, and threonine 155 each contribute to the ATP site. Residues asparagine 322–glutamate 455 are domain IV, binds dsDNA.

This sequence belongs to the DnaA family. Oligomerizes as a right-handed, spiral filament on DNA at oriC.

The protein resides in the cytoplasm. Functionally, plays an essential role in the initiation and regulation of chromosomal replication. ATP-DnaA binds to the origin of replication (oriC) to initiate formation of the DNA replication initiation complex once per cell cycle. Binds the DnaA box (a 9 base pair repeat at the origin) and separates the double-stranded (ds)DNA. Forms a right-handed helical filament on oriC DNA; dsDNA binds to the exterior of the filament while single-stranded (ss)DNA is stabiized in the filament's interior. The ATP-DnaA-oriC complex binds and stabilizes one strand of the AT-rich DNA unwinding element (DUE), permitting loading of DNA polymerase. After initiation quickly degrades to an ADP-DnaA complex that is not apt for DNA replication. Binds acidic phospholipids. This is Chromosomal replication initiator protein DnaA from Helicobacter pylori (strain P12).